Here is a 653-residue protein sequence, read N- to C-terminus: DNA mismatch repair protein MutL (653 aa).

The interval 375–425 (QNTPDYPRKAPRDNDRDESDNPQVRERAVSNPWVASPKTASTGKERYGSAS) is disordered. Residues 380–389 (YPRKAPRDND) are compositionally biased toward basic and acidic residues.

This sequence belongs to the DNA mismatch repair MutL/HexB family.

In terms of biological role, this protein is involved in the repair of mismatches in DNA. It is required for dam-dependent methyl-directed DNA mismatch repair. May act as a 'molecular matchmaker', a protein that promotes the formation of a stable complex between two or more DNA-binding proteins in an ATP-dependent manner without itself being part of a final effector complex. The protein is DNA mismatch repair protein MutL of Vibrio cholerae serotype O1 (strain ATCC 39541 / Classical Ogawa 395 / O395).